Here is a 336-residue protein sequence, read N- to C-terminus: Pyridoxal 5'-phosphate synthase subunit PdxS (336 aa).

Position 64 (D64) interacts with D-ribose 5-phosphate. K121 acts as the Schiff-base intermediate with D-ribose 5-phosphate in catalysis. Residue G193 coordinates D-ribose 5-phosphate. Residue K205 participates in D-glyceraldehyde 3-phosphate binding. Residues G254 and 275-276 contribute to the D-ribose 5-phosphate site; that span reads GS.

Belongs to the PdxS/SNZ family. In the presence of PdxT, forms a dodecamer of heterodimers.

The enzyme catalyses aldehydo-D-ribose 5-phosphate + D-glyceraldehyde 3-phosphate + L-glutamine = pyridoxal 5'-phosphate + L-glutamate + phosphate + 3 H2O + H(+). Its pathway is cofactor biosynthesis; pyridoxal 5'-phosphate biosynthesis. Its function is as follows. Catalyzes the formation of pyridoxal 5'-phosphate from ribose 5-phosphate (RBP), glyceraldehyde 3-phosphate (G3P) and ammonia. The ammonia is provided by the PdxT subunit. Can also use ribulose 5-phosphate and dihydroxyacetone phosphate as substrates, resulting from enzyme-catalyzed isomerization of RBP and G3P, respectively. This chain is Pyridoxal 5'-phosphate synthase subunit PdxS, found in Pyrobaculum aerophilum (strain ATCC 51768 / DSM 7523 / JCM 9630 / CIP 104966 / NBRC 100827 / IM2).